Here is a 106-residue protein sequence, read N- to C-terminus: Toxin-like structure LSTX-D5 (106 aa).

A signal peptide spans 1 to 20 (MMKVLVVVALLVTLISYSSS). The propeptide occupies 21–41 (EGIDDLETDELLSLMANEQTR). Disulfide bonds link Cys45-Cys60, Cys52-Cys69, Cys59-Cys85, and Cys71-Cys83.

This sequence belongs to the neurotoxin 19 (CSTX) family. 02 (D7) subfamily. Expressed by the venom gland.

It is found in the secreted. This chain is Toxin-like structure LSTX-D5, found in Lycosa singoriensis (Wolf spider).